A 571-amino-acid chain; its full sequence is MNQTRVFLIFAWLMVAVLLWMEWSREKAAPTPAPTTTSAPAAAQSVPGANPGAIPSAQVPGAPGQAAAQAQASATPASQRVTVTTDVLRLVLDGGRVLDAELLQFPQTKDEGSPPVRLLTEDPAHPYSAISGWASEDRNTPVPGADGFKLVGDTKDFVLAKGQNELQIPFVWTADNGVTIKRTLTVSRNEYAVRFKDEVSNAGAAPWNGYVYRTLDRTPTILSRSMTNPDSFSFNGATWYDNDKKYQRRAFKDYLEDGTLNQNITGGWLAMLQHHFFTAWIPQKDQTAHYVLSQVAGRDLIEARGPAFTVAPGQSTSTEARLWVGPKLVNLIAKEDVPGLDRVVDYSRFSMMAVIGQGLFWVLNQVHKLVGNWGWAIVGLVVLLKLVLYPLSATQYKSGAKMRRFQPRIAQLKERYGDDRQKFQTAMMELYKKEKINPMGGCLPILIQMPIFFALYWVLVESVELRQAPWFGWIQDLTARDPYFILPVINVAVMWFTQKLTPAPGMDPMQQKMMQFMPLVFGVMMAFMPSGLVLYWVVNGGLGLLQQWWMTKRHGGEPVPATTAPAPVKKK.

Residues Thr4–Ser24 form a helical membrane-spanning segment. The tract at residues Ala29 to Ser78 is disordered. 2 stretches are compositionally biased toward low complexity: residues Pro34–Ala43 and Pro55–Ser78. 4 helical membrane passes run Leu369–Tyr389, Gly440–Val460, Tyr483–Ala503, and Pro518–Val538.

It belongs to the OXA1/ALB3/YidC family. Type 1 subfamily. As to quaternary structure, interacts with the Sec translocase complex via SecD. Specifically interacts with transmembrane segments of nascent integral membrane proteins during membrane integration.

The protein localises to the cell inner membrane. In terms of biological role, required for the insertion and/or proper folding and/or complex formation of integral membrane proteins into the membrane. Involved in integration of membrane proteins that insert both dependently and independently of the Sec translocase complex, as well as at least some lipoproteins. Aids folding of multispanning membrane proteins. This is Membrane protein insertase YidC from Stenotrophomonas maltophilia (strain K279a).